The chain runs to 943 residues: Isoleucine--tRNA ligase (943 aa).

Positions 58–68 match the 'HIGH' region motif; sequence PYANGSIHIGH. E567 provides a ligand contact to L-isoleucyl-5'-AMP. A 'KMSKS' region motif is present at residues 608–612; the sequence is KMSKS. ATP is bound at residue K611. Residues C906, C909, C926, and C929 each coordinate Zn(2+).

The protein belongs to the class-I aminoacyl-tRNA synthetase family. IleS type 1 subfamily. As to quaternary structure, monomer. Requires Zn(2+) as cofactor.

It is found in the cytoplasm. It catalyses the reaction tRNA(Ile) + L-isoleucine + ATP = L-isoleucyl-tRNA(Ile) + AMP + diphosphate. In terms of biological role, catalyzes the attachment of isoleucine to tRNA(Ile). As IleRS can inadvertently accommodate and process structurally similar amino acids such as valine, to avoid such errors it has two additional distinct tRNA(Ile)-dependent editing activities. One activity is designated as 'pretransfer' editing and involves the hydrolysis of activated Val-AMP. The other activity is designated 'posttransfer' editing and involves deacylation of mischarged Val-tRNA(Ile). The sequence is that of Isoleucine--tRNA ligase from Ectopseudomonas mendocina (strain ymp) (Pseudomonas mendocina).